The sequence spans 610 residues: UvrABC system protein C (610 aa).

Positions 16 to 94 (NQPGVYRMYD…IKRYQPRYNV (79 aa)) constitute a GIY-YIG domain. The UVR domain maps to 204–239 (SQVIDALVARMEEASRALRFEEAARLRDQIQAVRRV).

This sequence belongs to the UvrC family. Interacts with UvrB in an incision complex.

The protein localises to the cytoplasm. The UvrABC repair system catalyzes the recognition and processing of DNA lesions. UvrC both incises the 5' and 3' sides of the lesion. The N-terminal half is responsible for the 3' incision and the C-terminal half is responsible for the 5' incision. This chain is UvrABC system protein C, found in Edwardsiella ictaluri (strain 93-146).